Reading from the N-terminus, the 149-residue chain is Large ribosomal subunit protein eL8 (149 aa).

This sequence belongs to the eukaryotic ribosomal protein eL8 family. As to quaternary structure, part of the 50S ribosomal subunit. Probably part of the RNase P complex.

It localises to the cytoplasm. Its function is as follows. Multifunctional RNA-binding protein that recognizes the K-turn motif in ribosomal RNA, the RNA component of RNase P, box H/ACA, box C/D and box C'/D' sRNAs. This Pyrobaculum calidifontis (strain DSM 21063 / JCM 11548 / VA1) protein is Large ribosomal subunit protein eL8.